The following is a 304-amino-acid chain: Putative HTH-type transcriptional regulatory protein Memar_2347 (304 aa).

The HTH cro/C1-type domain occupies 132-189 (LREVRERFRMSLGDLASHLGVSRRTISKYESGMGTTLDVAIKLEEIFNAPLVETIELL). Positions 143–162 (LGDLASHLGVSRRTISKYES) form a DNA-binding region, H-T-H motif.

In Methanoculleus marisnigri (strain ATCC 35101 / DSM 1498 / JR1), this protein is Putative HTH-type transcriptional regulatory protein Memar_2347.